The sequence spans 377 residues: Chaperone protein DnaJ (377 aa).

The region spanning 5–70 (DYYEILGVER…EKRAAYDQYG (66 aa)) is the J domain. The segment at 134-212 (GITKDIQIQT…CHGDGRVHKT (79 aa)) adopts a CR-type zinc-finger fold. Zn(2+)-binding residues include Cys-147, Cys-150, Cys-164, Cys-167, Cys-186, Cys-189, Cys-200, and Cys-203. CXXCXGXG motif repeat units follow at residues 147-154 (CDHCNGSG), 164-171 (CPTCHGHG), 186-193 (CPHCHGTG), and 200-207 (CKKCHGDG).

This sequence belongs to the DnaJ family. Homodimer. The cofactor is Zn(2+).

The protein localises to the cytoplasm. Its function is as follows. Participates actively in the response to hyperosmotic and heat shock by preventing the aggregation of stress-denatured proteins and by disaggregating proteins, also in an autonomous, DnaK-independent fashion. Unfolded proteins bind initially to DnaJ; upon interaction with the DnaJ-bound protein, DnaK hydrolyzes its bound ATP, resulting in the formation of a stable complex. GrpE releases ADP from DnaK; ATP binding to DnaK triggers the release of the substrate protein, thus completing the reaction cycle. Several rounds of ATP-dependent interactions between DnaJ, DnaK and GrpE are required for fully efficient folding. Also involved, together with DnaK and GrpE, in the DNA replication of plasmids through activation of initiation proteins. The polypeptide is Chaperone protein DnaJ (Actinobacillus succinogenes (strain ATCC 55618 / DSM 22257 / CCUG 43843 / 130Z)).